We begin with the raw amino-acid sequence, 278 residues long: 4-hydroxy-3-methylbut-2-enyl diphosphate reductase (278 aa).

A [4Fe-4S] cluster-binding site is contributed by cysteine 12. (2E)-4-hydroxy-3-methylbut-2-enyl diphosphate-binding residues include histidine 36 and histidine 70. Residues histidine 36 and histidine 70 each contribute to the dimethylallyl diphosphate site. Histidine 36 and histidine 70 together coordinate isopentenyl diphosphate. Cysteine 92 contributes to the [4Fe-4S] cluster binding site. (2E)-4-hydroxy-3-methylbut-2-enyl diphosphate is bound at residue histidine 120. Histidine 120 serves as a coordination point for dimethylallyl diphosphate. Residue histidine 120 participates in isopentenyl diphosphate binding. Glutamate 122 acts as the Proton donor in catalysis. Threonine 158 lines the (2E)-4-hydroxy-3-methylbut-2-enyl diphosphate pocket. Cysteine 186 is a binding site for [4Fe-4S] cluster. (2E)-4-hydroxy-3-methylbut-2-enyl diphosphate-binding residues include serine 214, asparagine 216, and serine 258. The dimethylallyl diphosphate site is built by serine 214, asparagine 216, and serine 258. Positions 214, 216, and 258 each coordinate isopentenyl diphosphate.

Belongs to the IspH family. Requires [4Fe-4S] cluster as cofactor.

It carries out the reaction isopentenyl diphosphate + 2 oxidized [2Fe-2S]-[ferredoxin] + H2O = (2E)-4-hydroxy-3-methylbut-2-enyl diphosphate + 2 reduced [2Fe-2S]-[ferredoxin] + 2 H(+). The enzyme catalyses dimethylallyl diphosphate + 2 oxidized [2Fe-2S]-[ferredoxin] + H2O = (2E)-4-hydroxy-3-methylbut-2-enyl diphosphate + 2 reduced [2Fe-2S]-[ferredoxin] + 2 H(+). It functions in the pathway isoprenoid biosynthesis; dimethylallyl diphosphate biosynthesis; dimethylallyl diphosphate from (2E)-4-hydroxy-3-methylbutenyl diphosphate: step 1/1. It participates in isoprenoid biosynthesis; isopentenyl diphosphate biosynthesis via DXP pathway; isopentenyl diphosphate from 1-deoxy-D-xylulose 5-phosphate: step 6/6. Catalyzes the conversion of 1-hydroxy-2-methyl-2-(E)-butenyl 4-diphosphate (HMBPP) into a mixture of isopentenyl diphosphate (IPP) and dimethylallyl diphosphate (DMAPP). Acts in the terminal step of the DOXP/MEP pathway for isoprenoid precursor biosynthesis. The sequence is that of 4-hydroxy-3-methylbut-2-enyl diphosphate reductase from Campylobacter lari (strain RM2100 / D67 / ATCC BAA-1060).